The following is an 88-amino-acid chain: Small ribosomal subunit protein uS15c (88 aa).

It belongs to the universal ribosomal protein uS15 family. Part of the 30S ribosomal subunit.

It is found in the plastid. Its subcellular location is the chloroplast. This chain is Small ribosomal subunit protein uS15c (rps15), found in Cycas taitungensis (Prince sago).